A 363-amino-acid chain; its full sequence is Membrane-bound lytic murein transglycosylase C (363 aa).

Residues Met-1 to Ala-15 form the signal peptide. Cys-16 carries N-palmitoyl cysteine lipidation. Residue Cys-16 is the site of S-diacylglycerol cysteine attachment.

It belongs to the transglycosylase Slt family.

The protein localises to the cell outer membrane. It catalyses the reaction Exolytic cleavage of the (1-&gt;4)-beta-glycosidic linkage between N-acetylmuramic acid (MurNAc) and N-acetylglucosamine (GlcNAc) residues in peptidoglycan, from either the reducing or the non-reducing ends of the peptidoglycan chains, with concomitant formation of a 1,6-anhydrobond in the MurNAc residue.. Murein-degrading enzyme. May play a role in recycling of muropeptides during cell elongation and/or cell division. This is Membrane-bound lytic murein transglycosylase C from Histophilus somni (strain 129Pt) (Haemophilus somnus).